The chain runs to 465 residues: Lysosomal dipeptide transporter MFSD1 (465 aa).

The interval 1 to 23 is disordered; that stretch reads MEEEDEEARALLAGGPDEADRGA. The short motif at 11-12 is the Dileucine internalization motif element; it reads LL. 12 consecutive transmembrane segments (helical) span residues 39 to 59, 83 to 103, 113 to 133, 135 to 155, 170 to 191, 213 to 233, 266 to 286, 303 to 323, 331 to 351, 361 to 381, 392 to 412, and 418 to 438; these read LAHR…SYFC, LLYA…GFLI, TIIF…GGIF, AFWL…SLAV, LNLV…NMNL, ITLM…LALA, LWLI…FIGL, SAIN…FGLL, IIWV…LAFT, LLGL…AFVV, FMQS…GMIL, and LFLE…VVLL.

This sequence belongs to the major facilitator superfamily. As to quaternary structure, homodimer. Interacts with lysosomal protein GLMP (via lumenal domain); the interaction starts while both proteins are still in the endoplasmic reticulum and is required for stabilization of MFSD1 in lysosomes but has no direct effect on its targeting to lysosomes or transporter activity.

It localises to the lysosome membrane. It catalyses the reaction L-alpha-aminoacyl-L-arginine(out) = L-alpha-aminoacyl-L-arginine(in). The enzyme catalyses L-arginyl-L-alpha-amino acid(out) = L-arginyl-L-alpha-amino acid(in). The catalysed reaction is L-arginyl-glycine(out) = L-arginyl-glycine(in). It carries out the reaction L-alpha-aminoacyl-L-lysine(out) = L-alpha-aminoacyl-L-lysine(in). It catalyses the reaction L-aspartyl-L-lysine(out) = L-aspartyl-L-lysine(in). The enzyme catalyses L-alanyl-L-lysine(out) = L-alanyl-L-lysine(in). The catalysed reaction is L-lysyl-L-alpha-amino acid(out) = L-lysyl-L-alpha-amino acid(in). It carries out the reaction L-lysyl-L-alanine(out) = L-lysyl-L-alanine(in). It catalyses the reaction L-lysyl-L-lysine(out) = L-lysyl-L-lysine(in). The enzyme catalyses L-lysyl-glycine(out) = L-lysyl-glycine(in). The catalysed reaction is L-alpha-aminoacyl-L-histidine(out) = L-alpha-aminoacyl-L-histidine(in). It carries out the reaction L-histidyl-L-alpha-amino acid(out) = L-histidyl-L-alpha-amino acid(in). It catalyses the reaction L-histidyl-glycine(out) = L-histidyl-glycine(in). Its function is as follows. Lysosomal dipeptide uniporter that selectively exports lysine, arginine or histidine-containing dipeptides with a net positive charge from the lysosome lumen into the cytosol. Could play a role in a specific type of protein O-glycosylation indirectly regulating macrophages migration and tissue invasion. Also essential for liver homeostasis. This Homo sapiens (Human) protein is Lysosomal dipeptide transporter MFSD1.